Reading from the N-terminus, the 90-residue chain is MKKAVINGEQIRSISDLHQTLKKELALPEYYGENLDALWDCLTGWVEYPLVLEWRQFEQSKQLTENGAESVLQVFREAKAEGCDITIILS.

The protein belongs to the barstar family.

It is found in the cytoplasm. Its function is as follows. Inhibitor of the ribonuclease barnase. Forms a one-to-one non-covalent complex. The protein is Barstar of Bacillus amyloliquefaciens (Bacillus velezensis).